Reading from the N-terminus, the 119-residue chain is Large ribosomal subunit protein bL20 (119 aa).

Belongs to the bacterial ribosomal protein bL20 family.

Its function is as follows. Binds directly to 23S ribosomal RNA and is necessary for the in vitro assembly process of the 50S ribosomal subunit. It is not involved in the protein synthesizing functions of that subunit. The polypeptide is Large ribosomal subunit protein bL20 (Laribacter hongkongensis (strain HLHK9)).